Reading from the N-terminus, the 529-residue chain is Peptide chain release factor 3 (529 aa).

Positions 11 to 280 (AKRRTFAIIS…GLVEWAPAPM (270 aa)) constitute a tr-type G domain. Residues 20 to 27 (SHPDAGKT), 88 to 92 (DTPGH), and 142 to 145 (NKLD) contribute to the GTP site.

Belongs to the TRAFAC class translation factor GTPase superfamily. Classic translation factor GTPase family. PrfC subfamily.

Its subcellular location is the cytoplasm. Increases the formation of ribosomal termination complexes and stimulates activities of RF-1 and RF-2. It binds guanine nucleotides and has strong preference for UGA stop codons. It may interact directly with the ribosome. The stimulation of RF-1 and RF-2 is significantly reduced by GTP and GDP, but not by GMP. The chain is Peptide chain release factor 3 from Klebsiella pneumoniae (strain 342).